The sequence spans 244 residues: 14-3-3 protein beta/alpha-B (244 aa).

At Met1 the chain carries N-acetylmethionine.

The protein belongs to the 14-3-3 family. In terms of assembly, homodimer, and heterodimer with other family members.

Its subcellular location is the cytoplasm. Its function is as follows. Adapter protein implicated in the regulation of a large spectrum of both general and specialized signaling pathways. Binds to a large number of partners, usually by recognition of a phosphoserine or phosphothreonine motif. Binding generally results in the modulation of the activity of the binding partner. The polypeptide is 14-3-3 protein beta/alpha-B (ywhab-b) (Xenopus laevis (African clawed frog)).